A 261-amino-acid polypeptide reads, in one-letter code: tRNA pseudouridine synthase A (261 aa).

Aspartate 51 acts as the Nucleophile in catalysis. Tyrosine 109 provides a ligand contact to substrate.

The protein belongs to the tRNA pseudouridine synthase TruA family. In terms of assembly, homodimer.

The enzyme catalyses uridine(38/39/40) in tRNA = pseudouridine(38/39/40) in tRNA. Functionally, formation of pseudouridine at positions 38, 39 and 40 in the anticodon stem and loop of transfer RNAs. This chain is tRNA pseudouridine synthase A, found in Shewanella baltica (strain OS223).